The sequence spans 1272 residues: Fused isobutyryl-CoA mutase (1272 aa).

The B12-binding domain occupies 20–158; it reads RLRFVTAAAL…ARCAEGARAA (139 aa). Residue His33 participates in adenosylcob(III)alamin binding. The interval 163–536 is GTPase chaperone MeaI; the sequence is ESQVGAWAAE…YRHVAEALRK (374 aa). Residues 193–240 form a disordered region; sequence GAVARNPSSEASRVAAAGRGDHLDRGVRAASTADTADTANTANTANTA. A compositionally biased stretch (low complexity) spans 221–240; that stretch reads AASTADTADTANTANTANTA. Residue 334 to 339 coordinates GTP; it reads GAGKSS. 4 residues coordinate Mg(2+): Ser338, Ile363, Asp364, and Asp377. Residue Arg380 participates in GTP binding. Residues Glu429 and Thr430 each contribute to the Mg(2+) site. Residue 476–479 coordinates GTP; that stretch reads NKFD. Residues 537–758 are linker; that stretch reads HGLRSGGGRL…MLDNLPGYFP (222 aa). 2 stretches are compositionally biased toward low complexity: residues 614 to 631 and 639 to 663; these read TVAT…KANA and ANAS…ATPT. Positions 614–667 are disordered; the sequence is TVATSASPGASASSKANACTSTSSKANASPGANTTANSNASATSGTATPTDALN. The substrate site is built by Phe766, Arg801, Arg907, Tyr951, Ser1000, Arg1035, and Lys1040. Residues Glu1152 and Asn1271 each coordinate GTP.

It belongs to the IcmF family. Homodimer. Adenosylcob(III)alamin serves as cofactor. The cofactor is Mg(2+).

It carries out the reaction 2-methylpropanoyl-CoA = butanoyl-CoA. The catalysed reaction is GTP + H2O = GDP + phosphate + H(+). Functionally, catalyzes the reversible interconversion of isobutyryl-CoA and n-butyryl-CoA, using radical chemistry. Also exhibits GTPase activity, associated with its G-protein domain (MeaI) that functions as a chaperone that assists cofactor delivery and proper holo-enzyme assembly. Does not exhibit methylmalonyl-CoA mutase (MCM) activity. The protein is Fused isobutyryl-CoA mutase of Paraburkholderia xenovorans (strain LB400).